Consider the following 510-residue polypeptide: NAD(P)H-quinone oxidoreductase subunit 2 A, chloroplastic (510 aa).

13 helical membrane passes run 24–44 (LLLFDGSLIFPECILIFGLIL), 57–77 (IPWLYFISSTSLVMSITALLF), 99–119 (IFQFLILLCSTLCIPLSVEYI), 124–144 (MAITEFLLFILTATLGGMFLC), 149–169 (LITIFVAPECFSLCSYLLSGY), 183–203 (YLLMGGASSSILVHGFSWLYG), 227–247 (PGISIALIFITVGIGFKLSPA), 295–315 (WHLLLEILAILSMILGNLIAI), 323–343 (MLAYSSIGQIGYVIIGIIVGD), 354–374 (YMLFYISMNLGTFACIVSFGL), 395–415 (ALSLALCLLSLGGLPPLAGFF), 418–438 (LHLFWCGWQAGLYFLVSIGLL), and 484–504 (MIVCVIASTIPGISMNPIIAI).

Belongs to the complex I subunit 2 family. NDH is composed of at least 16 different subunits, 5 of which are encoded in the nucleus.

The protein localises to the plastid. Its subcellular location is the chloroplast thylakoid membrane. The catalysed reaction is a plastoquinone + NADH + (n+1) H(+)(in) = a plastoquinol + NAD(+) + n H(+)(out). It carries out the reaction a plastoquinone + NADPH + (n+1) H(+)(in) = a plastoquinol + NADP(+) + n H(+)(out). Its function is as follows. NDH shuttles electrons from NAD(P)H:plastoquinone, via FMN and iron-sulfur (Fe-S) centers, to quinones in the photosynthetic chain and possibly in a chloroplast respiratory chain. The immediate electron acceptor for the enzyme in this species is believed to be plastoquinone. Couples the redox reaction to proton translocation, and thus conserves the redox energy in a proton gradient. The sequence is that of NAD(P)H-quinone oxidoreductase subunit 2 A, chloroplastic from Carica papaya (Papaya).